Consider the following 758-residue polypeptide: Spastin (758 aa).

Positions 1–103 (MVRTKNQSSS…SPRSGHHHSY (103 aa)) are disordered. Over 1 to 121 (MVRTKNQSSS…KQNLYVVSFP (121 aa)) the chain is Cytoplasmic. Residues 1–210 (MVRTKNQSSS…RPIQPLEMAA (210 aa)) are required for localization to punctate cytoplasmic foci. Composition is skewed to low complexity over residues 8–28 (SSSS…SSGA), 43–58 (RSSS…AGGS), 66–76 (SSNRRSPGSSP), and 85–95 (TDDLTPTTCSP). Positions 122 to 142 (IIFLFNVLRSLIYQLFCIFRY) form an intramembrane region, helical. Residues 143 to 758 (LYGASTKVIY…WSQDYGDITI (616 aa)) are Cytoplasmic-facing. Composition is skewed to polar residues over residues 169-180 (SKEQQQSLNHPS) and 189-198 (QEQQLSNQPQ). Residues 169-202 (SKEQQQSLNHPSELNREGDGQEQQLSNQPQRFRP) form a disordered region. Residues 208-758 (MAANRPGGGY…WSQDYGDITI (551 aa)) are sufficient for interaction with microtubules and microtubule severing. The MIT domain maps to 233 to 308 (HRRAFEYISK…SMARDRLHFL (76 aa)). Basic and acidic residues predominate over residues 323 to 339 (KEKQKEEARSKPQKSRE). The segment at 323 to 454 (KEKQKEEARS…GPSGSGASTP (132 aa)) is disordered. Composition is skewed to polar residues over residues 390–406 (NKSQ…TSVG) and 425–454 (QFSS…ASTP). Residues 443–455 (NNGPSGSGASTPV) form a required for interaction with microtubules region. Residue 523–530 (GPPGNGKT) participates in ATP binding.

The protein belongs to the AAA ATPase family. Spastin subfamily. Homohexamer. The homohexamer is stabilized by ATP-binding. The homohexamer may adopt a ring conformation through which microtubules pass prior to being severed. Interacts with microtubules. Interacts with atl; may be involved in microtubule dynamics.

Its subcellular location is the membrane. The protein localises to the cytoplasm. It localises to the cytoskeleton. The protein resides in the microtubule organizing center. It is found in the centrosome. Its subcellular location is the chromosome. The protein localises to the lipid droplet. The enzyme catalyses n ATP + n H2O + a microtubule = n ADP + n phosphate + (n+1) alpha/beta tubulin heterodimers.. In terms of biological role, ATP-dependent microtubule severing protein. Stimulates microtubule minus-end depolymerization and poleward microtubule flux in the mitotic spindle. Regulates microtubule stability in the neuromuscular junction synapse. Involved in lipid metabolism by regulating the size and distribution of lipid droplets. Involved in axon regeneration by regulating microtubule severing. The chain is Spastin from Drosophila simulans (Fruit fly).